Here is a 90-residue protein sequence, read N- to C-terminus: Putative F-box protein At5g16285 (90 aa).

The F-box domain occupies 1–46 (MRIESLLQHDVVERILERLAVNSLPRFKAVSKQWKSTIESQFFQGK).

In Arabidopsis thaliana (Mouse-ear cress), this protein is Putative F-box protein At5g16285.